The following is a 362-amino-acid chain: Thiol protease aleurain (362 aa).

A signal peptide spans 1-22 (MAHARVLLLALAVLATAAVAVA). Residues 23–143 (SSSSFADSNP…GNHLMRDAAA (121 aa)) constitute a propeptide, activation peptide. Intrachain disulfides connect cysteine 165/cysteine 208 and cysteine 199/cysteine 241. Cysteine 168 is a catalytic residue. An N-linked (GlcNAc...) asparagine glycan is attached at asparagine 188. A glycan (N-linked (GlcNAc...) asparagine) is linked at asparagine 257. The cysteines at positions 299 and 349 are disulfide-linked. Catalysis depends on residues histidine 308 and asparagine 328.

Belongs to the peptidase C1 family.

The protein resides in the vacuole. The catalysed reaction is Hydrolysis of proteins, acting as an aminopeptidase (notably, cleaving Arg-|-Xaa bonds) as well as an endopeptidase.. Its function is as follows. May play a role in proteolysis leading to mobilization of nitrogen during senescence and starvation. In Hordeum vulgare (Barley), this protein is Thiol protease aleurain.